A 459-amino-acid polypeptide reads, in one-letter code: MAP kinase-interacting serine/threonine-protein kinase 2 (459 aa).

The tract at residues 37-67 is disordered; sequence DFSPQCEARPDMPSSQPIDIPDAKKRGRKKK. Positions 60 to 66 match the Nuclear localization signal motif; it reads KKRGRKK. Ser-74 is modified (phosphoserine). One can recognise a Protein kinase domain in the interval 84 to 368; it reads QLQEDVLGEG…AAQVLQHPWV (285 aa). Residues 90–98 and Lys-113 each bind ATP; that span reads LGEGAHARV. 160–162 is a staurosporine binding site; the sequence is EKM. Asp-205 functions as the Proton acceptor in the catalytic mechanism. Residue Glu-209 coordinates staurosporine. Thr-244 and Thr-249 each carry phosphothreonine. Positions 299, 311, and 314 each coordinate Zn(2+). The residue at position 379 (Thr-379) is a Phosphothreonine. Phosphoserine is present on residues Ser-431 and Ser-434. Residues 438-442 carry the MAP kinase binding motif; it reads LAQRR. Phosphoserine is present on Ser-446. Thr-450 carries the post-translational modification Phosphothreonine.

Belongs to the protein kinase superfamily. CAMK Ser/Thr protein kinase family. As to quaternary structure, interacts with ESR2 and EIF4E in the nucleus. Monomer. Interacts with the C-terminal regions of EIF4G1 and EIF4G2; this interaction is promoted when MAPK pathways are repressed but repressed upon ERK proteins activation. Also binds to dephosphorylated MAPK3/ERK1 and MAPK1/ERK2. Interaction with phosphorylated MAPK3/ERK1 and MAPK1/ERK2 protects it from dephosphorylation and inactivation. Mg(2+) is required as a cofactor. Requires Zn(2+) as cofactor. Post-translationally, dual phosphorylation of Thr-244 and Thr-249 activates the kinase. Phosphorylation of Thr-379 activates the kinase. Phosphorylated upon arsenic trioxide As(2)O(3) treatment. Phosphorylated by MAPK1/ERK2, MAPK11 and MAPK14. Dephosphorylated by PP2A. In terms of tissue distribution, ubiquitously expressed in all tissues examined, with high levels in skeletal muscle and low levels in brain.

Its subcellular location is the cytoplasm. The protein localises to the nucleus. It localises to the PML body. The enzyme catalyses L-seryl-[protein] + ATP = O-phospho-L-seryl-[protein] + ADP + H(+). The catalysed reaction is L-threonyl-[protein] + ATP = O-phospho-L-threonyl-[protein] + ADP + H(+). Its activity is regulated as follows. Inhibited by CGP57380 and staurosporine. In terms of biological role, serine/threonine-protein kinase that phosphorylates SFPQ/PSF, HNRNPA1 and EIF4E. May play a role in the response to environmental stress and cytokines. Appears to regulate translation by phosphorylating EIF4E, thus increasing the affinity of this protein for the 7-methylguanosine-containing mRNA cap. Required for mediating PP2A-inhibition-induced EIF4E phosphorylation. Triggers EIF4E shuttling from cytoplasm to nucleus. Enhances the formation of EIF4F complex in pachytene spermatocytes, thus promoting mRNA translation during spermatogenesis. Displays a high basal kinase activity. Acts as a mediator of the suppressive effects of IFNgamma on hematopoiesis. Negative regulator for signals that control generation of arsenic trioxide As(2)O(3)-dependent apoptosis and anti-leukemic responses. Involved in anti-apoptotic signaling in response to serum withdrawal. In Mus musculus (Mouse), this protein is MAP kinase-interacting serine/threonine-protein kinase 2 (Mknk2).